The following is a 240-amino-acid chain: MVLELYLDLLSQPCRAIYIFAKKNNIPFQMHTVELRKGEHLSDAFAQVNPMKKVPAMKDGGFTLCESVAILLYLAHKYKVPDHWYPQDLQARARVDEYLAWQHTTLRRSCLRTLWHKVMFPVFLGEQIRPEMLAATLADLDVNVQVLEDQFLQDKDFLVGPHISLADVVAITELMHPVGGGCPVFEGRPRLAAWYRRVEAAVGKDLFLEAHEVILKVRDCPPADPVIKQKLMPRVLTMIQ.

The GST N-terminal domain maps to 2–82; the sequence is VLELYLDLLS…YLAHKYKVPD (81 aa). Glutathione-binding positions include histidine 40, 53 to 54, and 66 to 67; these read KV and ES. Residues 88 to 223 enclose the GST C-terminal domain; it reads DLQARARVDE…ILKVRDCPPA (136 aa).

This sequence belongs to the GST superfamily. Theta family. In terms of assembly, homodimer. In terms of tissue distribution, in liver, highest expression found in central vein limiting plate hepatocytes. In lung, expressed mainly in club cells of the bronchiolar epithelium and, at low levels, in type II alveolar cells.

Its subcellular location is the cytoplasm. The enzyme catalyses RX + glutathione = an S-substituted glutathione + a halide anion + H(+). In terms of biological role, conjugation of reduced glutathione to a wide number of exogenous and endogenous hydrophobic electrophiles. Also binds steroids, bilirubin, carcinogens and numerous organic anions. Has dichloromethane dehalogenase activity. This chain is Glutathione S-transferase theta-1 (Gstt1), found in Rattus norvegicus (Rat).